We begin with the raw amino-acid sequence, 216 residues long: Somatotropin (216 aa).

The first 26 residues, 1-26 (MAAGPRNSVLLAFALLCLPWPQEVGT), serve as a signal peptide directing secretion. Residue His45 participates in Zn(2+) binding. A disulfide bridge links Cys78 with Cys189. The residue at position 131 (Ser131) is a Phosphoserine. Residue Glu198 coordinates Zn(2+). Cys206 and Cys214 are joined by a disulfide.

The protein belongs to the somatotropin/prolactin family.

It localises to the secreted. Plays an important role in growth control. Its major role in stimulating body growth is to stimulate the liver and other tissues to secrete IGF1. It stimulates both the differentiation and proliferation of myoblasts. It also stimulates amino acid uptake and protein synthesis in muscle and other tissues. The polypeptide is Somatotropin (GH1) (Felis catus (Cat)).